Here is a 687-residue protein sequence, read N- to C-terminus: Dictomallein (687 aa).

Disordered regions lie at residues 1–45 and 73–112; these read MGNG…SRRL and TAGG…STSA. One can recognise a Peptidase M66 domain in the interval 233-501; it reads PVFGTDADVQ…QAWIASRVLA (269 aa). Residue His393 participates in Zn(2+) binding. Glu394 is a catalytic residue. Zn(2+) is bound by residues His397 and His403.

The protein belongs to the dictomallein family. It depends on Zn(2+) as a cofactor.

This Burkholderia pseudomallei (strain 668) protein is Dictomallein (dtmL).